A 72-amino-acid chain; its full sequence is Translation initiation factor IF-1 (72 aa).

The region spanning 1-72 (MSKDDCIEFE…TKGRIIYRMK (72 aa)) is the S1-like domain.

Belongs to the IF-1 family. In terms of assembly, component of the 30S ribosomal translation pre-initiation complex which assembles on the 30S ribosome in the order IF-2 and IF-3, IF-1 and N-formylmethionyl-tRNA(fMet); mRNA recruitment can occur at any time during PIC assembly.

The protein resides in the cytoplasm. Its function is as follows. One of the essential components for the initiation of protein synthesis. Stabilizes the binding of IF-2 and IF-3 on the 30S subunit to which N-formylmethionyl-tRNA(fMet) subsequently binds. Helps modulate mRNA selection, yielding the 30S pre-initiation complex (PIC). Upon addition of the 50S ribosomal subunit IF-1, IF-2 and IF-3 are released leaving the mature 70S translation initiation complex. This chain is Translation initiation factor IF-1, found in Xylella fastidiosa (strain 9a5c).